The chain runs to 263 residues: Lens fiber major intrinsic protein (263 aa).

Residues 1-9 (MWELRSASF) lie on the Cytoplasmic side of the membrane. A helical transmembrane segment spans residues 10-29 (WRAIFAEFFATLFYVFFGLG). Over 30–41 (ASLRWAPGPLHV) the chain is Extracellular. The helical transmembrane segment at 42 to 59 (LQVALAFGLALATLVQTV) threads the bilayer. Over 60–61 (GH) the chain is Cytoplasmic. Residues 62–77 (ISGAHVNPAVTFAFLV) constitute an intramembrane region (discontinuously helical). Residues 68-70 (NPA) carry the NPA 1 motif. The Cytoplasmic segment spans residues 78–82 (GSQMS). Residues 83 to 106 (LLRAFCYIAAQLLGAVAGAAVLYS) traverse the membrane as a helical segment. Residues 107 to 127 (VTPPAVRGNLALNTLHAGVSV) lie on the Extracellular side of the membrane. The chain crosses the membrane as a helical span at residues 128–148 (GQATTVEIFLTLQFVLCIFAT). Over 149–156 (YDERRNGR) the chain is Cytoplasmic. Residues 157-175 (MGSVALAVGFSLTLGHLFG) form a helical membrane-spanning segment. The Extracellular segment spans residues 176-178 (MYY). Residues 179–193 (TGAGMNPARSFAPAI) constitute an intramembrane region (discontinuously helical). The NPA 2 signature appears at 184–186 (NPA). The Extracellular portion of the chain corresponds to 194–200 (LTRNFSN). The chain crosses the membrane as a helical span at residues 201-222 (HWVYWVGPIIGGGLGSLLYDFL). The Cytoplasmic segment spans residues 223–263 (LFPRLKSVSERLSILKGARPSDSNGQPEGTGEPVELKTQAL). Residues 227–237 (LKSVSERLSIL) form an interaction with CALM region. A phosphoserine mark is found at serine 235, serine 243, and serine 245. The segment at 240-263 (ARPSDSNGQPEGTGEPVELKTQAL) is disordered. Deamidated asparagine is present on asparagine 246.

It belongs to the MIP/aquaporin (TC 1.A.8) family. Homotetramer; each monomer provides an independent water pore. Two homotetramers on opposing membranes can dimerize, forming a cell-cell junction. Interacts with CALM; the calcium-calmodulin/CALM complex interacts with the cytoplasmic domains of two aquaporins, leading to channel closure. Interacts with BFSP1 (via C-terminus); prevents calcium-dependent inhibition of the water channel activity. In terms of processing, subject to partial proteolytic cleavage in the eye lens core. Partial proteolysis promotes interactions between tetramers from adjoining membranes. Fatty acylated at Met-1 and Lys-238. The acyl modifications, in decreasing order of ion abundance, are: oleoyl (C18:1) &gt; palmitoyl (C16:0) &gt; stearoyl (C18:0) &gt; eicosenoyl (C20:1) &gt; dihomo-gamma-linolenoyl (C20:3) &gt; palmitoleoyl (C16:1) &gt; eicosadienoyl (C20:2).

The protein resides in the cell membrane. It localises to the cell junction. The enzyme catalyses H2O(in) = H2O(out). With respect to regulation, the water channel activity is inhibited by calcium through calmodulin/CALM. Functionally, aquaporins form homotetrameric transmembrane channels, with each monomer independently mediating water transport across the plasma membrane along its osmotic gradient. Specifically expressed in lens fiber cells, this aquaporin is crucial for maintaining lens water homeostasis and transparency. Beyond water permeability, it also acts as a cell-to-cell adhesion molecule, forming thin junctions between lens fiber cells that are essential for maintaining the ordered structure and transparency of the lens. The chain is Lens fiber major intrinsic protein from Mus musculus (Mouse).